Reading from the N-terminus, the 253-residue chain is 5'/3'-nucleotidase SurE (253 aa).

A divalent metal cation contacts are provided by aspartate 8, aspartate 9, serine 39, and asparagine 92.

This sequence belongs to the SurE nucleotidase family. It depends on a divalent metal cation as a cofactor.

The protein localises to the cytoplasm. The enzyme catalyses a ribonucleoside 5'-phosphate + H2O = a ribonucleoside + phosphate. It carries out the reaction a ribonucleoside 3'-phosphate + H2O = a ribonucleoside + phosphate. It catalyses the reaction [phosphate](n) + H2O = [phosphate](n-1) + phosphate + H(+). In terms of biological role, nucleotidase with a broad substrate specificity as it can dephosphorylate various ribo- and deoxyribonucleoside 5'-monophosphates and ribonucleoside 3'-monophosphates with highest affinity to 3'-AMP. Also hydrolyzes polyphosphate (exopolyphosphatase activity) with the preference for short-chain-length substrates (P20-25). Might be involved in the regulation of dNTP and NTP pools, and in the turnover of 3'-mononucleotides produced by numerous intracellular RNases (T1, T2, and F) during the degradation of various RNAs. The polypeptide is 5'/3'-nucleotidase SurE (Escherichia fergusonii (strain ATCC 35469 / DSM 13698 / CCUG 18766 / IAM 14443 / JCM 21226 / LMG 7866 / NBRC 102419 / NCTC 12128 / CDC 0568-73)).